The primary structure comprises 288 residues: S-methyl-5'-thioadenosine phosphorylase (288 aa).

Phosphate is bound by residues Ser-12, 54–55 (RH), and 87–88 (SA). Met-186 is a binding site for substrate. Residue Thr-187 participates in phosphate binding. 210 to 212 (DYD) lines the substrate pocket.

This sequence belongs to the PNP/MTAP phosphorylase family. MTAP subfamily. In terms of assembly, homohexamer. Dimer of a homotrimer.

The catalysed reaction is S-methyl-5'-thioadenosine + phosphate = 5-(methylsulfanyl)-alpha-D-ribose 1-phosphate + adenine. The protein operates within amino-acid biosynthesis; L-methionine biosynthesis via salvage pathway; S-methyl-5-thio-alpha-D-ribose 1-phosphate from S-methyl-5'-thioadenosine (phosphorylase route): step 1/1. Catalyzes the reversible phosphorylation of S-methyl-5'-thioadenosine (MTA) to adenine and 5-methylthioribose-1-phosphate. Involved in the breakdown of MTA, a major by-product of polyamine biosynthesis. Responsible for the first step in the methionine salvage pathway after MTA has been generated from S-adenosylmethionine. Has broad substrate specificity with 6-aminopurine nucleosides as preferred substrates. In Chloroflexus aurantiacus (strain ATCC 29366 / DSM 635 / J-10-fl), this protein is S-methyl-5'-thioadenosine phosphorylase.